Here is an 88-residue protein sequence, read N- to C-terminus: Putative membrane protein insertion efficiency factor (88 aa).

Positions 68–88 are disordered; it reads VPPPNSDTRARGEADARSHRL. Over residues 75-88 the composition is skewed to basic and acidic residues; that stretch reads TRARGEADARSHRL.

The protein belongs to the UPF0161 family.

It localises to the cell inner membrane. Could be involved in insertion of integral membrane proteins into the membrane. The chain is Putative membrane protein insertion efficiency factor from Burkholderia ambifaria (strain MC40-6).